A 142-amino-acid polypeptide reads, in one-letter code: Ribosome maturation factor RimP (142 aa).

This sequence belongs to the RimP family.

It is found in the cytoplasm. Its function is as follows. Required for maturation of 30S ribosomal subunits. The chain is Ribosome maturation factor RimP from Aromatoleum aromaticum (strain DSM 19018 / LMG 30748 / EbN1) (Azoarcus sp. (strain EbN1)).